The sequence spans 241 residues: Octanoyltransferase (241 aa).

The 186-residue stretch at 43–228 (ADTPDEIWLV…RLTANLDGSP (186 aa)) folds into the BPL/LPL catalytic domain. Substrate is bound by residues 83–90 (RGGQITYH), 159–161 (ALG), and 172–174 (GVS). The active-site Acyl-thioester intermediate is the Cys190.

Belongs to the LipB family.

It is found in the cytoplasm. The enzyme catalyses octanoyl-[ACP] + L-lysyl-[protein] = N(6)-octanoyl-L-lysyl-[protein] + holo-[ACP] + H(+). It participates in protein modification; protein lipoylation via endogenous pathway; protein N(6)-(lipoyl)lysine from octanoyl-[acyl-carrier-protein]: step 1/2. Its function is as follows. Catalyzes the transfer of endogenously produced octanoic acid from octanoyl-acyl-carrier-protein onto the lipoyl domains of lipoate-dependent enzymes. Lipoyl-ACP can also act as a substrate although octanoyl-ACP is likely to be the physiological substrate. The chain is Octanoyltransferase from Paraburkholderia phytofirmans (strain DSM 17436 / LMG 22146 / PsJN) (Burkholderia phytofirmans).